Reading from the N-terminus, the 634-residue chain is MAQETMSFQAEVKQLLHLMIHSLYSNKEIFLRELISNASDAADKLRFEAIENSALYENDPNLRIRVSYDKDARTITIDDNGIGMSRDEAIANLGTIARSGTKEFFGKLSGDQQKDAALIGQFGVGFYSGFIVADRITVETRRAGLPASEGVRWESAGEGDFAVEQIERAARGTTITLHLRADEDELLSSHRLKSIIQKYSDHVALPILMKKEEWDAEKSAMVTKDEDETVNQASALWTRSKSDITDEQYKQFYQHLSHDHQDPLTWTHNRVEGRSEYTQLLYVPTHAPFDMFNRDHRGGLKLYVKRVFIMDDAEQLLPAYLRFVKGVVDSADLPLNVSREILQESRDVKAIREGVTKRVLSMLEDLANSDNEADKEKYAGFWKEFGQVLKEGIGEDFANRERIAKLLRFASTHTDTPEQTVSLADYVARMKPEQTKIYYVTADTWQAATHSPHLEVFRKKGVEVLLLTDRVDEWILSFLTEFEGKPLQSVARGDLDLGALNDEEKEAQEKVSEEFKPLVEKMKEALKDKAKDVRLTFRLTDSPSCLVADDGEMSGYLQRMLKAAGQQAPSFHPILEVNPEHALVKGLHADSANFDDWCHLLFDQALLAEGGALEDPASFVKRTNALLLARANEA.

Positions 1–339 (MAQETMSFQA…SADLPLNVSR (339 aa)) are a; substrate-binding. The tract at residues 340–559 (EILQESRDVK…DGEMSGYLQR (220 aa)) is b. Positions 560-634 (MLKAAGQQAP…ALLLARANEA (75 aa)) are c.

This sequence belongs to the heat shock protein 90 family. As to quaternary structure, homodimer.

The protein localises to the cytoplasm. Functionally, molecular chaperone. Has ATPase activity. This chain is Chaperone protein HtpG, found in Paraburkholderia xenovorans (strain LB400).